The following is a 226-amino-acid chain: DELTA-thalatoxin-Avl1b (226 aa).

The N-terminal stretch at 1 to 21 is a signal peptide; that stretch reads MRHFVVFLYMFLALSIPTAFA. The propeptide occupies 22 to 45; sequence KKHIVTKKGNHQDITNDNEGENAE. The segment at 50 to 59 is plays an important role in the hemolytic activity; that stretch reads AVAGAVIAGG. An N-terminal region region spans residues 58–77; it reads GGELALKILTKILDEIGKID. Ser-101, Val-134, Ser-152, Pro-154, Tyr-180, and Tyr-184 together coordinate phosphocholine. The interval 152–167 is trp-rich region, which is important for the binding to lipid membrane; sequence SVPFDYNLYTNWWNVK. The short motif at 191 to 193 is the Cell attachment site, crucial for protein stability element; the sequence is KPS.

Belongs to the actinoporin family. Sea anemone subfamily. In terms of assembly, octamer or nonamer in membranes. Monomer in the soluble state.

It localises to the secreted. It is found in the nematocyst. Its subcellular location is the target cell membrane. Functionally, pore-forming protein that forms cations-selective hydrophilic pores of around 1 nm and causes cytolysis. Pore formation is a multi-step process that involves specific recognition of membrane sphingomyelin (but neither cholesterol nor phosphatidylcholine) using aromatic rich region and adjacent phosphocholine (POC) binding site, firm binding to the membrane (mainly driven by hydrophobic interactions) accompanied by the transfer of the N-terminal region to the lipid-water interface and finally pore formation after oligomerization of monomers. This Actineria villosa (Okinawan sea anemone) protein is DELTA-thalatoxin-Avl1b.